The following is a 245-amino-acid chain: Tetraspanin-6 (245 aa).

Residues 1 to 19 are Cytoplasmic-facing; it reads MASPSRRLQTKPVITCFKS. The helical transmembrane segment at 20-40 threads the bilayer; it reads VLLIYTFIFWITGVILLAVGI. Topologically, residues 41 to 59 are extracellular; the sequence is WGKVSLENYFSLLNEKATN. A helical transmembrane segment spans residues 60 to 80; the sequence is VPFVLIATGTVIILLGTFGCF. Over 81 to 93 the chain is Cytoplasmic; that stretch reads ATCRASAWMLKLY. The helical transmembrane segment at 94–114 threads the bilayer; the sequence is AMFLTLVFLVELVAAIVGFVF. At 115–208 the chain is on the extracellular side; sequence RHEIKNSFKN…IKVMTIIESE (94 aa). N134 carries N-linked (GlcNAc...) asparagine glycosylation. Residues 209 to 229 form a helical membrane-spanning segment; that stretch reads MGVVAGISFGVACFQLIGIFL. Topologically, residues 230-245 are cytoplasmic; that stretch reads AYCLSRAITNNQYEIV.

The protein belongs to the tetraspanin (TM4SF) family.

It is found in the membrane. The chain is Tetraspanin-6 (TSPAN6) from Homo sapiens (Human).